An 865-amino-acid chain; its full sequence is Alanine--tRNA ligase (865 aa).

The Zn(2+) site is built by histidine 554, histidine 558, cysteine 656, and histidine 660.

Belongs to the class-II aminoacyl-tRNA synthetase family. Requires Zn(2+) as cofactor.

It is found in the cytoplasm. It carries out the reaction tRNA(Ala) + L-alanine + ATP = L-alanyl-tRNA(Ala) + AMP + diphosphate. In terms of biological role, catalyzes the attachment of alanine to tRNA(Ala) in a two-step reaction: alanine is first activated by ATP to form Ala-AMP and then transferred to the acceptor end of tRNA(Ala). Also edits incorrectly charged Ser-tRNA(Ala) and Gly-tRNA(Ala) via its editing domain. The polypeptide is Alanine--tRNA ligase (Francisella tularensis subsp. novicida (strain U112)).